Consider the following 127-residue polypeptide: ATP synthase epsilon chain (127 aa).

The protein belongs to the ATPase epsilon chain family. F-type ATPases have 2 components, CF(1) - the catalytic core - and CF(0) - the membrane proton channel. CF(1) has five subunits: alpha(3), beta(3), gamma(1), delta(1), epsilon(1). CF(0) has three main subunits: a, b and c.

The protein localises to the cell inner membrane. In terms of biological role, produces ATP from ADP in the presence of a proton gradient across the membrane. This Leptospira borgpetersenii serovar Hardjo-bovis (strain JB197) protein is ATP synthase epsilon chain.